The chain runs to 345 residues: Dihydroorotate dehydrogenase (quinone) (345 aa).

Residues 65–69 (AGLDK) and threonine 89 contribute to the FMN site. Lysine 69 lines the substrate pocket. Substrate is bound at residue 114-118 (NRMGF). 2 residues coordinate FMN: asparagine 142 and asparagine 175. Residue asparagine 175 coordinates substrate. The active-site Nucleophile is the serine 178. Asparagine 180 is a substrate binding site. The FMN site is built by lysine 220 and threonine 248. 249 to 250 (NT) contributes to the substrate binding site. FMN contacts are provided by residues glycine 271, glycine 300, and 321–322 (YT).

The protein belongs to the dihydroorotate dehydrogenase family. Type 2 subfamily. In terms of assembly, monomer. FMN is required as a cofactor.

It localises to the cell membrane. It carries out the reaction (S)-dihydroorotate + a quinone = orotate + a quinol. The protein operates within pyrimidine metabolism; UMP biosynthesis via de novo pathway; orotate from (S)-dihydroorotate (quinone route): step 1/1. Catalyzes the conversion of dihydroorotate to orotate with quinone as electron acceptor. The chain is Dihydroorotate dehydrogenase (quinone) from Burkholderia thailandensis (strain ATCC 700388 / DSM 13276 / CCUG 48851 / CIP 106301 / E264).